The chain runs to 592 residues: V-type ATP synthase alpha chain 2 (592 aa).

Residue 237-244 participates in ATP binding; it reads GGFGTGKT.

The protein belongs to the ATPase alpha/beta chains family.

The enzyme catalyses ATP + H2O + 4 H(+)(in) = ADP + phosphate + 5 H(+)(out). Its function is as follows. Produces ATP from ADP in the presence of a proton gradient across the membrane. The V-type alpha chain is a catalytic subunit. The chain is V-type ATP synthase alpha chain 2 from Clostridium tetani (strain Massachusetts / E88).